A 491-amino-acid polypeptide reads, in one-letter code: NADH-quinone oxidoreductase subunit N 1 (491 aa).

Helical transmembrane passes span Ile9–Leu29, Pro38–Trp58, Phe76–Phe96, Ser104–Gly124, Leu126–Phe146, Phe161–Ala181, Val211–Ile231, Ala246–Ala266, Phe276–Ile296, Leu304–Gly324, Ser329–Val349, Val375–Phe395, Ala410–Ile432, and Val461–Ser481.

It belongs to the complex I subunit 2 family. As to quaternary structure, NDH-1 is composed of 14 different subunits. Subunits NuoA, H, J, K, L, M, N constitute the membrane sector of the complex.

The protein resides in the cell membrane. It catalyses the reaction a quinone + NADH + 5 H(+)(in) = a quinol + NAD(+) + 4 H(+)(out). In terms of biological role, NDH-1 shuttles electrons from NADH, via FMN and iron-sulfur (Fe-S) centers, to quinones in the respiratory chain. The immediate electron acceptor for the enzyme in this species is believed to be a menaquinone. Couples the redox reaction to proton translocation (for every two electrons transferred, four hydrogen ions are translocated across the cytoplasmic membrane), and thus conserves the redox energy in a proton gradient. The protein is NADH-quinone oxidoreductase subunit N 1 of Symbiobacterium thermophilum (strain DSM 24528 / JCM 14929 / IAM 14863 / T).